Reading from the N-terminus, the 357-residue chain is ATP-dependent 6-phosphofructokinase (357 aa).

ATP-binding positions include Gly-12, 80–81 (KG), and 107–110 (GDGS). Asp-108 provides a ligand contact to Mg(2+). Substrate contacts are provided by residues 131–133 (TID), Arg-168, 175–177 (MGR), Glu-229, Arg-272, and 278–281 (HIQR). Asp-133 (proton acceptor) is an active-site residue.

This sequence belongs to the phosphofructokinase type A (PFKA) family. Mixed-substrate PFK group III subfamily. Homodimer or homotetramer. Requires Mg(2+) as cofactor.

Its subcellular location is the cytoplasm. The catalysed reaction is beta-D-fructose 6-phosphate + ATP = beta-D-fructose 1,6-bisphosphate + ADP + H(+). The protein operates within carbohydrate degradation; glycolysis; D-glyceraldehyde 3-phosphate and glycerone phosphate from D-glucose: step 3/4. Its activity is regulated as follows. Subject to allosteric activation by ADP and other diphosphonucleosides, and inhibition by phosphoenolpyruvate. Its function is as follows. Catalyzes the phosphorylation of D-fructose 6-phosphate to fructose 1,6-bisphosphate by ATP, the first committing step of glycolysis. The chain is ATP-dependent 6-phosphofructokinase from Trichormus variabilis (strain ATCC 29413 / PCC 7937) (Anabaena variabilis).